Consider the following 88-residue polypeptide: MRKNKLEKMLKFPCLFTYKVIGLAQPELVDKIVKIIQCKLPGDYVPQIKSSNKGNYLSISITICANTFEEIESLYYELSNINIVRMVL.

The protein belongs to the UPF0250 family.

The chain is UPF0250 protein bbp_432 from Buchnera aphidicola subsp. Baizongia pistaciae (strain Bp).